Consider the following 63-residue polypeptide: Large ribosomal subunit protein uL29 (63 aa).

This sequence belongs to the universal ribosomal protein uL29 family.

This is Large ribosomal subunit protein uL29 from Vibrio parahaemolyticus serotype O3:K6 (strain RIMD 2210633).